We begin with the raw amino-acid sequence, 259 residues long: Phosphatidylglycerol--prolipoprotein diacylglyceryl transferase (259 aa).

Helical transmembrane passes span 9–29 (IIFSIGPLAISWYSLSYVIGI), 55–75 (FITYAVIGIIVGGRLGFVLLY), 92–112 (EGGMSFHGGALGGIIAAYLFC), and 117–137 (INFLSLTDIIAPVVPIGLFLG). R138 lines the a 1,2-diacyl-sn-glycero-3-phospho-(1'-sn-glycerol) pocket. The next 3 membrane-spanning stretches (helical) occupy residues 172–192 (QLYEAFFEGLVLFSILAYTTF), 201–221 (GLNSGIFFTFYGLFRITIEIF), and 228–248 (IGFILDSLTMGQILSVPMLLL).

It belongs to the Lgt family.

It is found in the cell inner membrane. It catalyses the reaction L-cysteinyl-[prolipoprotein] + a 1,2-diacyl-sn-glycero-3-phospho-(1'-sn-glycerol) = an S-1,2-diacyl-sn-glyceryl-L-cysteinyl-[prolipoprotein] + sn-glycerol 1-phosphate + H(+). The protein operates within protein modification; lipoprotein biosynthesis (diacylglyceryl transfer). Functionally, catalyzes the transfer of the diacylglyceryl group from phosphatidylglycerol to the sulfhydryl group of the N-terminal cysteine of a prolipoprotein, the first step in the formation of mature lipoproteins. The polypeptide is Phosphatidylglycerol--prolipoprotein diacylglyceryl transferase (Rickettsia conorii (strain ATCC VR-613 / Malish 7)).